Consider the following 464-residue polypeptide: Argininosuccinate lyase (464 aa).

It belongs to the lyase 1 family. Argininosuccinate lyase subfamily.

Its subcellular location is the cytoplasm. It catalyses the reaction 2-(N(omega)-L-arginino)succinate = fumarate + L-arginine. Its pathway is amino-acid biosynthesis; L-arginine biosynthesis; L-arginine from L-ornithine and carbamoyl phosphate: step 3/3. With respect to regulation, strongly inhibited by L-arginine. Inhibitory effects are lowered at pH 7.0 compared to those at pH 8.0. At 37 degrees Celsius and pH 7.5, activity decreases to 73% and 31% in the presence of 1 mM and 10 mM arginine, respectively. Activity also decreases to 84%, 93%, 82% and 85% in the presence of 10 mM sodium citrate, citrulline, asparatate and glutamate, respectively. Activity decreases to 96% in presence of 1 mM L-lysine. Functionally, catalyzes the last step of arginine biosynthesis, the conversion of argininosuccinate into L-arginine and fumarate. The polypeptide is Argininosuccinate lyase (Arthrospira platensis (strain NIES-39 / UTEX 3086 / IAM M-135) (Spirulina platensis)).